The following is a 426-amino-acid chain: Histidine--tRNA ligase (426 aa).

The protein belongs to the class-II aminoacyl-tRNA synthetase family. As to quaternary structure, homodimer.

Its subcellular location is the cytoplasm. It catalyses the reaction tRNA(His) + L-histidine + ATP = L-histidyl-tRNA(His) + AMP + diphosphate + H(+). This chain is Histidine--tRNA ligase, found in Geobacillus kaustophilus (strain HTA426).